A 386-amino-acid polypeptide reads, in one-letter code: Decapping nuclease RAI1 (386 aa).

R34 contacts substrate. Residue E159 coordinates a divalent metal cation. E205 lines the substrate pocket. Residues D207, E225, and L226 each coordinate a divalent metal cation. Positions 227 and 251 each coordinate substrate.

This sequence belongs to the DXO/Dom3Z family. In terms of assembly, interacts with RAT1; the interaction is direct, stabilizes RAT1 protein structure and stimulates its exoribonuclease activity. The interaction also stimulates RAI1 pyrophosphohydrolase activity, probably by recruiting it to mRNA substrates. The cofactor is a divalent metal cation.

Its subcellular location is the nucleus. The enzyme catalyses a 5'-end NAD(+)-phospho-ribonucleoside in mRNA + H2O = a 5'-end phospho-ribonucleoside in mRNA + NAD(+) + H(+). The catalysed reaction is a 5'-end (N(7)-methyl 5'-triphosphoguanosine)-ribonucleoside-ribonucleotide in mRNA + H2O = a (N(7)-methyl 5'-triphosphoguanosine)-nucleoside + a 5'-end phospho-ribonucleoside in mRNA + H(+). It carries out the reaction a 5'-end triphospho-ribonucleoside in mRNA + H2O = a 5'-end phospho-ribonucleoside in mRNA + diphosphate + H(+). In terms of biological role, decapping enzyme for NAD-capped RNAs: specifically hydrolyzes the nicotinamide adenine dinucleotide (NAD) cap from a subset of RNAs by removing the entire NAD moiety from the 5'-end of an NAD-capped RNA. The NAD-cap is present at the 5'-end of some RNAs and snoRNAs. In contrast to the canonical 5'-end N7 methylguanosine (m7G) cap, the NAD cap promotes mRNA decay. Also acts as a non-canonical decapping enzyme that removes the entire cap structure of m7G capped or incompletely capped RNAs. Has decapping activity toward incomplete 5'-end m7G cap mRNAs such as unmethylated 5'-end-capped RNA (cap0), while it has no activity toward 2'-O-ribose methylated m7G cap (cap1). Also possesses RNA 5'-pyrophosphohydrolase activity by hydrolyzing the 5'-end triphosphate to release pyrophosphates. Stimulates exoribonuclease activity of Rat1, allowing it to degrade RNAs with stable secondary structure more effectively. This Cryptococcus neoformans var. neoformans serotype D (strain B-3501A) (Filobasidiella neoformans) protein is Decapping nuclease RAI1 (RAI1).